The primary structure comprises 60 residues: Potassium channel toxin ImKTx88 (60 aa).

A signal peptide spans 1 to 22 (MSNFSVFLIALLFCSVFILSEA). Disulfide bonds link Cys30–Cys51, Cys36–Cys56, and Cys40–Cys58.

The protein belongs to the short scorpion toxin superfamily. Potassium channel inhibitor family. In terms of tissue distribution, expressed by the venom gland.

It localises to the secreted. Its function is as follows. Recombinant toxin selectively inhibits Kv1.3/KCNA3 potassium channels with an IC(50) of 91 pM. In Isometrus maculatus (Lesser brown scorpion), this protein is Potassium channel toxin ImKTx88.